We begin with the raw amino-acid sequence, 744 residues long: 3-isopropylmalate dehydratase (744 aa).

Cys-341, Cys-401, and Cys-404 together coordinate [4Fe-4S] cluster.

Belongs to the aconitase/IPM isomerase family. As to quaternary structure, monomer. Requires [4Fe-4S] cluster as cofactor.

The catalysed reaction is (2R,3S)-3-isopropylmalate = (2S)-2-isopropylmalate. Its pathway is amino-acid biosynthesis; L-leucine biosynthesis; L-leucine from 3-methyl-2-oxobutanoate: step 2/4. Catalyzes the isomerization between 2-isopropylmalate and 3-isopropylmalate, via the formation of 2-isopropylmaleate. This is 3-isopropylmalate dehydratase (leu1) from Phycomyces blakesleeanus (strain ATCC 8743b / DSM 1359 / FGSC 10004 / NBRC 33097 / NRRL 1555).